The following is a 305-amino-acid chain: Tyrosine recombinase XerC (305 aa).

The Core-binding (CB) domain occupies 4-95 (ISIQELIKQW…TVKNFYKFLE (92 aa)). Residues 116 to 298 (LLPKALSVDD…SIKHLEAVYN (183 aa)) enclose the Tyr recombinase domain. Residues R159, K182, H250, R253, and H276 contribute to the active site. Y285 (O-(3'-phospho-DNA)-tyrosine intermediate) is an active-site residue.

This sequence belongs to the 'phage' integrase family. XerC subfamily. Forms a cyclic heterotetrameric complex composed of two molecules of XerC and two molecules of XerD.

It localises to the cytoplasm. Its function is as follows. Site-specific tyrosine recombinase, which acts by catalyzing the cutting and rejoining of the recombining DNA molecules. The XerC-XerD complex is essential to convert dimers of the bacterial chromosome into monomers to permit their segregation at cell division. It also contributes to the segregational stability of plasmids. This chain is Tyrosine recombinase XerC, found in Rickettsia typhi (strain ATCC VR-144 / Wilmington).